The sequence spans 118 residues: Protein Rev (118 aa).

Serine 5 is subject to Phosphoserine; by host CK2. A homomultimerization region spans residues 18–26 (LIKILYQSN). The disordered stretch occupies residues 23–49 (YQSNPPPSPEGTRQARRNRRRRWRARQ). A Nuclear localization signal and RNA-binding (RRE) motif is present at residues 34–50 (TRQARRNRRRRWRARQR). Basic residues predominate over residues 36 to 49 (QARRNRRRRWRARQ). The Nuclear export signal and binding to XPO1 motif lies at 73–84 (LQLPPLERLNLN). A disordered region spans residues 89 to 118 (CGASGTQGVGSPQISVESPTVLESGTEEQC). Phosphoserine; by host occurs at positions 92 and 99. Polar residues predominate over residues 92-112 (SGTQGVGSPQISVESPTVLES).

The protein belongs to the HIV-1 REV protein family. As to quaternary structure, homomultimer; when bound to the RRE. Multimeric assembly is essential for activity and may involve XPO1. Binds to human KPNB1, XPO1, TNPO1, RANBP5 and IPO7. Interacts with the viral Integrase. Interacts with human KHDRBS1. Interacts with human NAP1; this interaction decreases Rev multimerization and stimulates its activity. Interacts with human DEAD-box helicases DDX3 and DDX24; these interactions may serve for viral RNA export to the cytoplasm and packaging, respectively. Interacts with human PSIP1; this interaction may inhibit HIV-1 DNA integration by promoting dissociation of the Integrase-LEDGF/p75 complex. In terms of processing, asymmetrically arginine dimethylated at one site by host PRMT6. Methylation impairs the RNA-binding activity and export of viral RNA from the nucleus to the cytoplasm. Post-translationally, phosphorylated by protein kinase CK2. Presence of, and maybe binding to the N-terminus of the regulatory beta subunit of CK2 is necessary for CK2-mediated Rev's phosphorylation.

The protein resides in the host nucleus. Its subcellular location is the host nucleolus. The protein localises to the host cytoplasm. In terms of biological role, escorts unspliced or incompletely spliced viral pre-mRNAs (late transcripts) out of the nucleus of infected cells. These pre-mRNAs carry a recognition sequence called Rev responsive element (RRE) located in the env gene, that is not present in fully spliced viral mRNAs (early transcripts). This function is essential since most viral proteins are translated from unspliced or partially spliced pre-mRNAs which cannot exit the nucleus by the pathway used by fully processed cellular mRNAs. Rev itself is translated from a fully spliced mRNA that readily exits the nucleus. Rev's nuclear localization signal (NLS) binds directly to KPNB1/Importin beta-1 without previous binding to KPNA1/Importin alpha-1. KPNB1 binds to the GDP bound form of RAN (Ran-GDP) and targets Rev to the nucleus. In the nucleus, the conversion from Ran-GDP to Ran-GTP dissociates Rev from KPNB1 and allows Rev's binding to the RRE in viral pre-mRNAs. Rev multimerization on the RRE via cooperative assembly exposes its nuclear export signal (NES) to the surface. Rev can then form a complex with XPO1/CRM1 and Ran-GTP, leading to nuclear export of the complex. Conversion from Ran-GTP to Ran-GDP mediates dissociation of the Rev/RRE/XPO1/RAN complex, so that Rev can return to the nucleus for a subsequent round of export. Beside KPNB1, also seems to interact with TNPO1/Transportin-1, RANBP5/IPO5 and IPO7/RANBP7 for nuclear import. The nucleoporin-like HRB/RIP is an essential cofactor that probably indirectly interacts with Rev to release HIV RNAs from the perinuclear region to the cytoplasm. In Human immunodeficiency virus type 1 group M subtype D (isolate Z2/CDC-Z34) (HIV-1), this protein is Protein Rev.